The chain runs to 179 residues: MDTNNTNNINSLENPIDLENDPNILFTELNVKLESLITFLTKNDKDNQIFVDEIIDNKVTDLLIASKELENYFISQQSKYSAEKNKIQLKQEIYKVKKEIENKDRLIERYKNKVKEWKYHFEPLYQSQNHILHSTAQGLSGIENQFSPVFTPMPNTPSILQNLSQAKPSPSLGLGSTIL.

Positions 81 to 119 form a coiled coil; the sequence is SAEKNKIQLKQEIYKVKKEIENKDRLIERYKNKVKEWKY.

The protein belongs to the Mediator complex subunit 28 family. In terms of assembly, component of the Mediator complex.

Its subcellular location is the nucleus. Component of the Mediator complex, a coactivator involved in the regulated transcription of nearly all RNA polymerase II-dependent genes. Mediator functions as a bridge to convey information from gene-specific regulatory proteins to the basal RNA polymerase II transcription machinery. Mediator is recruited to promoters by direct interactions with regulatory proteins and serves as a scaffold for the assembly of a functional preinitiation complex with RNA polymerase II and the general transcription factors. This is Putative mediator of RNA polymerase II transcription subunit 28 (med28) from Dictyostelium discoideum (Social amoeba).